A 977-amino-acid chain; its full sequence is Mast/stem cell growth factor receptor Kit (977 aa).

Residues 1–25 (MRGARGAWDFLFVLLLLLLVQTGSS) form the signal peptide. At 26-525 (QPSVSPGELS…QIHAHTLFTP (500 aa)) the chain is on the extracellular side. 5 consecutive Ig-like C2-type domains span residues 27-112 (PSVS…VFVR), 121-205 (DLPL…LKVR), 212-309 (PVVS…LEVV), 318-411 (PMMN…VYVN), and 414-508 (PEIL…FNFA). Cysteines 58 and 97 form a disulfide. Asn94, Asn130, and Asn145 each carry an N-linked (GlcNAc...) asparagine glycan. 3 cysteine pairs are disulfide-bonded: Cys136–Cys186, Cys151–Cys183, and Cys233–Cys291. 9 N-linked (GlcNAc...) asparagine glycosylation sites follow: Asn284, Asn294, Asn301, Asn321, Asn353, Asn368, Asn401, Asn464, and Asn487. The cysteines at positions 429 and 492 are disulfide-linked. The helical transmembrane segment at 526–546 (LLIGFVIAAGLMCIFVMILTY) threads the bilayer. Topologically, residues 547 to 977 (KYLQKPMYEV…TQPLLVHEDV (431 aa)) are cytoplasmic. Tyr548 and Tyr554 each carry phosphotyrosine. Tyr569 serves as a coordination point for Mg(2+). A phosphotyrosine; by autocatalysis mark is found at Tyr569 and Tyr571. The tract at residues 569–571 (YVY) is important for interaction with phosphotyrosine-binding proteins. The region spanning 590 to 938 (LSFGKTLGAG…ISESTNHIYS (349 aa)) is the Protein kinase domain. ATP-binding positions include 597-604 (GAGAFGKV), Lys624, and 672-678 (EYCCYGD). Residues Tyr704 and Tyr722 each carry the phosphotyrosine; by autocatalysis modification. Position 731 is a phosphotyrosine (Tyr731). A phosphoserine; by PKC/PRKCA mark is found at Ser742 and Ser747. Asp793 acts as the Proton acceptor in catalysis. Arg797 provides a ligand contact to ATP. Residues Asn798 and Asp811 each coordinate Mg(2+). Ser822 carries the post-translational modification Phosphoserine. Tyr824 is modified (phosphotyrosine; by autocatalysis). At Ser892 the chain carries Phosphoserine. Tyr901 is subject to Phosphotyrosine. Tyr937 is modified (phosphotyrosine; by autocatalysis). Ser960 carries the phosphoserine modification.

Belongs to the protein kinase superfamily. Tyr protein kinase family. CSF-1/PDGF receptor subfamily. Monomer in the absence of bound KITLG/SCF. Homodimer in the presence of bound KITLG/SCF, forming a heterotetramer with two KITLG/SCF molecules. Interacts (via phosphorylated tyrosine residues) with the adapter proteins GRB2 and GRB7 (via SH2 domain), and SH2B2/APS. Interacts (via C-terminus) with MPDZ (via the tenth PDZ domain). Interacts (via phosphorylated tyrosine residues) with PIK3R1 and PIK3CD. Interacts (via phosphorylated tyrosine) with CRK (isoform Crk-II), FYN, SHC1 and MATK/CHK (via SH2 domain). Interacts with LYN and FES/FPS. Interacts (via phosphorylated tyrosine residues) with the protein phosphatases PTPN6/SHP-1 (via SH2 domain), PTPN11/SHP-2 (via SH2 domain) and PTPRU. Interacts with PLCG1. Interacts with DOK1 and TEC. Interacts with IL1RAP (independent of stimulation with KITLG/SCF). A mast cell-specific KITLG/SCF-induced interleukin-33 signaling complex contains IL1RL1, IL1RAP, KIT and MYD88. In terms of processing, ubiquitinated by SOCS6. KIT is rapidly ubiquitinated after autophosphorylation induced by KITLG/SCF binding, leading to internalization and degradation. Post-translationally, autophosphorylated on tyrosine residues. KITLG/SCF binding promotes autophosphorylation. Phosphorylated tyrosine residues are important for interaction with specific binding partners.

The protein localises to the cell membrane. The enzyme catalyses L-tyrosyl-[protein] + ATP = O-phospho-L-tyrosyl-[protein] + ADP + H(+). With respect to regulation, present in an inactive conformation in the absence of bound ligand. KITLG/SCF binding leads to dimerization and activation by autophosphorylation on tyrosine residues. Activity is down-regulated by PRKCA-mediated phosphorylation on serine residues. In terms of biological role, tyrosine-protein kinase that acts as a cell-surface receptor for the cytokine KITLG/SCF and plays an essential role in the regulation of cell survival and proliferation, hematopoiesis, stem cell maintenance, gametogenesis, mast cell development, migration and function, and in melanogenesis. In response to KITLG/SCF binding, KIT can activate several signaling pathways. Phosphorylates PIK3R1, PLCG1, SH2B2/APS and CBL. Activates the AKT1 signaling pathway by phosphorylation of PIK3R1, the regulatory subunit of phosphatidylinositol 3-kinase. Activated KIT also transmits signals via GRB2 and activation of RAS, RAF1 and the MAP kinases MAPK1/ERK2 and/or MAPK3/ERK1. Promotes activation of STAT family members STAT1, STAT3, STAT5A and STAT5B. Activation of PLCG1 leads to the production of the cellular signaling molecules diacylglycerol and inositol 1,4,5-trisphosphate. KIT signaling is modulated by protein phosphatases, and by rapid internalization and degradation of the receptor. Activated KIT promotes phosphorylation of the protein phosphatases PTPN6/SHP-1 and PTPRU, and of the transcription factors STAT1, STAT3, STAT5A and STAT5B. Promotes phosphorylation of PIK3R1, CBL, CRK (isoform Crk-II), LYN, MAPK1/ERK2 and/or MAPK3/ERK1, PLCG1, SRC and SHC1. This Bos taurus (Bovine) protein is Mast/stem cell growth factor receptor Kit (KIT).